Here is a 342-residue protein sequence, read N- to C-terminus: S-adenosylmethionine:tRNA ribosyltransferase-isomerase (342 aa).

The protein belongs to the QueA family. Monomer.

It is found in the cytoplasm. The enzyme catalyses 7-aminomethyl-7-carbaguanosine(34) in tRNA + S-adenosyl-L-methionine = epoxyqueuosine(34) in tRNA + adenine + L-methionine + 2 H(+). Its pathway is tRNA modification; tRNA-queuosine biosynthesis. Transfers and isomerizes the ribose moiety from AdoMet to the 7-aminomethyl group of 7-deazaguanine (preQ1-tRNA) to give epoxyqueuosine (oQ-tRNA). This is S-adenosylmethionine:tRNA ribosyltransferase-isomerase from Streptococcus pneumoniae (strain Hungary19A-6).